The primary structure comprises 266 residues: Ribosomal RNA small subunit methyltransferase A (266 aa).

S-adenosyl-L-methionine is bound by residues Asn-10, Ile-12, Gly-37, Glu-58, Asp-82, and Asn-105.

Belongs to the class I-like SAM-binding methyltransferase superfamily. rRNA adenine N(6)-methyltransferase family. RsmA subfamily.

It localises to the cytoplasm. It carries out the reaction adenosine(1518)/adenosine(1519) in 16S rRNA + 4 S-adenosyl-L-methionine = N(6)-dimethyladenosine(1518)/N(6)-dimethyladenosine(1519) in 16S rRNA + 4 S-adenosyl-L-homocysteine + 4 H(+). Functionally, specifically dimethylates two adjacent adenosines (A1518 and A1519) in the loop of a conserved hairpin near the 3'-end of 16S rRNA in the 30S particle. May play a critical role in biogenesis of 30S subunits. This is Ribosomal RNA small subunit methyltransferase A from Mycoplasma capricolum subsp. capricolum (strain California kid / ATCC 27343 / NCTC 10154).